We begin with the raw amino-acid sequence, 272 residues long: HMP-PP phosphatase (272 aa).

The active-site Nucleophile is the Asp-8. Mg(2+)-binding residues include Asp-8, Asp-10, and Asp-212.

The protein belongs to the HAD-like hydrolase superfamily. Cof family. It depends on Mg(2+) as a cofactor.

It catalyses the reaction 4-amino-2-methyl-5-(diphosphooxymethyl)pyrimidine + H2O = 4-amino-2-methyl-5-(phosphooxymethyl)pyrimidine + phosphate + H(+). In terms of biological role, catalyzes the hydrolysis of 4-amino-2-methyl-5-hydroxymethylpyrimidine pyrophosphate (HMP-PP) to 4-amino-2-methyl-5-hydroxymethylpyrimidine phosphate (HMP-P). In Escherichia coli (strain UTI89 / UPEC), this protein is HMP-PP phosphatase.